The following is a 160-amino-acid chain: Small ribosomal subunit protein uS10m (160 aa).

Belongs to the universal ribosomal protein uS10 family. In terms of assembly, component of the mitochondrial ribosome small subunit (28S) which comprises a 12S rRNA and about 30 distinct proteins.

It localises to the mitochondrion. The protein is Small ribosomal subunit protein uS10m (Mrps10) of Mus musculus (Mouse).